A 1203-amino-acid polypeptide reads, in one-letter code: DNA-directed RNA polymerase subunit beta' (1203 aa).

Cysteine 60, cysteine 62, cysteine 75, and cysteine 78 together coordinate Zn(2+). Mg(2+)-binding residues include aspartate 449, aspartate 451, and aspartate 453. The Zn(2+) site is built by cysteine 818, cysteine 892, cysteine 899, and cysteine 902. The tract at residues arginine 1180–valine 1203 is disordered. Over residues glutamate 1190 to valine 1203 the composition is skewed to acidic residues.

Belongs to the RNA polymerase beta' chain family. As to quaternary structure, the RNAP catalytic core consists of 2 alpha, 1 beta, 1 beta' and 1 omega subunit. When a sigma factor is associated with the core the holoenzyme is formed, which can initiate transcription. It depends on Mg(2+) as a cofactor. Zn(2+) is required as a cofactor.

It carries out the reaction RNA(n) + a ribonucleoside 5'-triphosphate = RNA(n+1) + diphosphate. Functionally, DNA-dependent RNA polymerase catalyzes the transcription of DNA into RNA using the four ribonucleoside triphosphates as substrates. In Oceanobacillus iheyensis (strain DSM 14371 / CIP 107618 / JCM 11309 / KCTC 3954 / HTE831), this protein is DNA-directed RNA polymerase subunit beta'.